The primary structure comprises 81 residues: MKNSFRFSFTVITTFIICVLVSGAMVNGQCSFPQPVGPNGKCVPKDCKSLCHKKYKGGSICTTGKPNICMCLVCRRRSPEV.

The N-terminal stretch at 1–24 is a signal peptide; that stretch reads MKNSFRFSFTVITTFIICVLVSGA. 4 disulfides stabilise this stretch: C30/C74, C42/C61, C47/C69, and C51/C71.

Belongs to the DEFL family.

The protein localises to the secreted. This is Defensin-like protein 144 (LCR10) from Arabidopsis thaliana (Mouse-ear cress).